A 67-amino-acid chain; its full sequence is Conotoxin TsMMSK-011 (67 aa).

A signal peptide spans 1-22 (MMSKLGVLLTICLLLFPLTVLP). The propeptide occupies 23 to 50 (MDGDQPADLPALRTQDIATDQSPWFDPV). 3 disulfides stabilise this stretch: cysteine 53–cysteine 65, cysteine 54–cysteine 61, and cysteine 58–cysteine 64. Position 63 is a 4-hydroxyproline (proline 63).

The protein belongs to the conotoxin M superfamily. In terms of tissue distribution, expressed by the venom duct.

The protein localises to the secreted. This chain is Conotoxin TsMMSK-011, found in Conus tessulatus (Tessellate cone).